The sequence spans 201 residues: Small ribosomal subunit protein uS4 (201 aa).

The S4 RNA-binding domain maps to 91–151 (SRLDNVVYRA…DKSINTLPFE (61 aa)).

The protein belongs to the universal ribosomal protein uS4 family. Part of the 30S ribosomal subunit. Contacts protein S5. The interaction surface between S4 and S5 is involved in control of translational fidelity.

One of the primary rRNA binding proteins, it binds directly to 16S rRNA where it nucleates assembly of the body of the 30S subunit. Functionally, with S5 and S12 plays an important role in translational accuracy. The protein is Small ribosomal subunit protein uS4 of Mycolicibacterium gilvum (strain PYR-GCK) (Mycobacterium gilvum (strain PYR-GCK)).